Consider the following 392-residue polypeptide: Chorismate synthase (392 aa).

NADP(+) contacts are provided by Arg40 and Arg46. FMN is bound by residues 135 to 137, 256 to 257, Gly300, 315 to 319, and Arg341; these read RAS, QA, and KPIAT.

This sequence belongs to the chorismate synthase family. As to quaternary structure, homotetramer. FMNH2 serves as cofactor.

The catalysed reaction is 5-O-(1-carboxyvinyl)-3-phosphoshikimate = chorismate + phosphate. The protein operates within metabolic intermediate biosynthesis; chorismate biosynthesis; chorismate from D-erythrose 4-phosphate and phosphoenolpyruvate: step 7/7. Functionally, catalyzes the anti-1,4-elimination of the C-3 phosphate and the C-6 proR hydrogen from 5-enolpyruvylshikimate-3-phosphate (EPSP) to yield chorismate, which is the branch point compound that serves as the starting substrate for the three terminal pathways of aromatic amino acid biosynthesis. This reaction introduces a second double bond into the aromatic ring system. The protein is Chorismate synthase of Nocardioides sp. (strain ATCC BAA-499 / JS614).